The sequence spans 377 residues: Chaperone protein DnaJ (377 aa).

The region spanning 5–70 (DYYQVLGVSR…KKRSAYDQLG (66 aa)) is the J domain. The segment at 138–216 (GVTKIISFKT…CYGEGRYINT (79 aa)) adopts a CR-type zinc-finger fold. Zn(2+)-binding residues include Cys151, Cys154, Cys168, Cys171, Cys190, Cys193, Cys204, and Cys207. CXXCXGXG motif repeat units lie at residues 151 to 158 (CEACTGKG), 168 to 175 (CPTCRGSG), 190 to 197 (CQTCRGAG), and 204 to 211 (CTKCYGEG).

Belongs to the DnaJ family. As to quaternary structure, homodimer. It depends on Zn(2+) as a cofactor.

The protein localises to the cytoplasm. Its function is as follows. Participates actively in the response to hyperosmotic and heat shock by preventing the aggregation of stress-denatured proteins and by disaggregating proteins, also in an autonomous, DnaK-independent fashion. Unfolded proteins bind initially to DnaJ; upon interaction with the DnaJ-bound protein, DnaK hydrolyzes its bound ATP, resulting in the formation of a stable complex. GrpE releases ADP from DnaK; ATP binding to DnaK triggers the release of the substrate protein, thus completing the reaction cycle. Several rounds of ATP-dependent interactions between DnaJ, DnaK and GrpE are required for fully efficient folding. Also involved, together with DnaK and GrpE, in the DNA replication of plasmids through activation of initiation proteins. This chain is Chaperone protein DnaJ, found in Orientia tsutsugamushi (strain Ikeda) (Rickettsia tsutsugamushi).